Reading from the N-terminus, the 342-residue chain is Methionyl-tRNA formyltransferase (342 aa).

(6S)-5,6,7,8-tetrahydrofolate is bound at residue 108 to 111 (SLLP).

Belongs to the Fmt family.

It catalyses the reaction L-methionyl-tRNA(fMet) + (6R)-10-formyltetrahydrofolate = N-formyl-L-methionyl-tRNA(fMet) + (6S)-5,6,7,8-tetrahydrofolate + H(+). Functionally, attaches a formyl group to the free amino group of methionyl-tRNA(fMet). The formyl group appears to play a dual role in the initiator identity of N-formylmethionyl-tRNA by promoting its recognition by IF2 and preventing the misappropriation of this tRNA by the elongation apparatus. The sequence is that of Methionyl-tRNA formyltransferase from Prochlorococcus marinus (strain MIT 9313).